Here is a 302-residue protein sequence, read N- to C-terminus: Probable proteasome inhibitor (302 aa).

A2 is subject to N-acetylalanine. 2 disordered regions span residues 151-188 and 259-302; these read LDGK…QIHP and ARFD…SDFI. Pro residues predominate over residues 259–269; sequence ARFDPYGPPGV.

This sequence belongs to the proteasome inhibitor PI31 family.

Could play an important role in control of proteasome function. Inhibits the hydrolysis of protein and peptide substrates by the 20S proteasome. The chain is Probable proteasome inhibitor from Arabidopsis thaliana (Mouse-ear cress).